The sequence spans 185 residues: TATA-box-binding protein 2 (185 aa).

2 consecutive repeat copies span residues 7–84 (IENI…ANEL) and 100–178 (VQNV…KTQL).

Belongs to the TBP family.

In terms of biological role, general factor that plays a role in the activation of archaeal genes transcribed by RNA polymerase. Binds specifically to the TATA box promoter element which lies close to the position of transcription initiation. This is TATA-box-binding protein 2 from Methanosarcina acetivorans (strain ATCC 35395 / DSM 2834 / JCM 12185 / C2A).